Consider the following 495-residue polypeptide: UDP-glycosyltransferase 73C6 (495 aa).

Residues Ser-296, 356-358 (SPQ), 373-381 (HCGWNSTLE), and 395-398 (FADQ) contribute to the UDP-alpha-D-glucose site. The segment at 449–475 (SDDAKERRRRAKELGESAHKAVEEGGS) is disordered. A compositionally biased stretch (basic and acidic residues) spans 450-471 (DDAKERRRRAKELGESAHKAVE).

This sequence belongs to the UDP-glycosyltransferase family. As to expression, expressed in leaves and flowers, and at a very low level in roots.

Acts as a UDP-glucose:flavonol-3-O-glycoside-7-O-glucosyltransferase. 6- and 7-hydroxyflavone, but not 3- or 5-hydroxyflavone are accepted as substrates. Possesses low quercetin 3-O-glucosyltransferase, 7-O-glucosyltransferase and 4'-O-glucosyltransferase activities in vitro. This chain is UDP-glycosyltransferase 73C6 (UGT73C6), found in Arabidopsis thaliana (Mouse-ear cress).